The primary structure comprises 200 residues: Probable nicotinate-nucleotide adenylyltransferase (200 aa).

It belongs to the NadD family.

It carries out the reaction nicotinate beta-D-ribonucleotide + ATP + H(+) = deamido-NAD(+) + diphosphate. The protein operates within cofactor biosynthesis; NAD(+) biosynthesis; deamido-NAD(+) from nicotinate D-ribonucleotide: step 1/1. Catalyzes the reversible adenylation of nicotinate mononucleotide (NaMN) to nicotinic acid adenine dinucleotide (NaAD). The sequence is that of Probable nicotinate-nucleotide adenylyltransferase from Clostridium botulinum (strain Alaska E43 / Type E3).